Here is a 516-residue protein sequence, read N- to C-terminus: UDP-N-acetylmuramyl-tripeptide synthetase (516 aa).

Position 38 (Ser-38) interacts with UDP-N-acetyl-alpha-D-muramoyl-L-alanyl-D-glutamate. Residue 116 to 122 participates in ATP binding; the sequence is GTKGKTT. UDP-N-acetyl-alpha-D-muramoyl-L-alanyl-D-glutamate is bound by residues 162–163, Ser-189, and Arg-197; that span reads TT. Lys-231 is modified (N6-carboxylysine).

This sequence belongs to the MurCDEF family. MurE subfamily. Carboxylation is probably crucial for Mg(2+) binding and, consequently, for the gamma-phosphate positioning of ATP.

The protein localises to the cytoplasm. The protein operates within cell wall biogenesis; peptidoglycan biosynthesis. In terms of biological role, catalyzes the addition of an amino acid to the nucleotide precursor UDP-N-acetylmuramoyl-L-alanyl-D-glutamate (UMAG) in the biosynthesis of bacterial cell-wall peptidoglycan. This is UDP-N-acetylmuramyl-tripeptide synthetase from Lactobacillus delbrueckii subsp. bulgaricus (strain ATCC 11842 / DSM 20081 / BCRC 10696 / JCM 1002 / NBRC 13953 / NCIMB 11778 / NCTC 12712 / WDCM 00102 / Lb 14).